The chain runs to 622 residues: 4-hydroxyphenylalkanoate adenylyltransferase (622 aa).

The protein belongs to the ATP-dependent AMP-binding enzyme family.

It carries out the reaction 17-(4-hydroxyphenyl)heptadecanoate + holo-[(phenol)carboxyphthiodiolenone synthase] + ATP = 17-(4-hydroxyphenyl)heptadecanoyl-[(phenol)carboxyphthiodiolenone synthase] + AMP + diphosphate. It catalyses the reaction 19-(4-hydroxyphenyl)nonadecanoate + holo-[(phenol)carboxyphthiodiolenone synthase] + ATP = 19-(4-hydroxyphenyl)nonadecanoyl-[(phenol)carboxyphthiodiolenone synthase] + AMP + diphosphate. It functions in the pathway lipid metabolism; fatty acid biosynthesis. Functionally, catalyzes the activation of long-chain fatty acids as acyl-adenylates (acyl-AMP), which are then transferred to the multifunctional polyketide synthase PpsA for further chain extension. Involved in the biosynthesis of phenolphthiocerol, which is an important intermediate in the biosynthesis of phenolic glycolipid (PGL), also called mycosid B. This Mycobacterium marinum (strain ATCC BAA-535 / M) protein is 4-hydroxyphenylalkanoate adenylyltransferase (fadD29).